Reading from the N-terminus, the 533-residue chain is D-3-phosphoglycerate dehydrogenase (533 aa).

Ala-2 is subject to N-acetylalanine. Ser-14 carries the phosphoserine modification. Position 21 is an N6-acetyllysine; alternate (Lys-21). Lys-21 is covalently cross-linked (Glycyl lysine isopeptide (Lys-Gly) (interchain with G-Cter in SUMO1); alternate). Lys-21 is covalently cross-linked (Glycyl lysine isopeptide (Lys-Gly) (interchain with G-Cter in SUMO2); alternate). Position 58 is an N6-acetyllysine (Lys-58). NAD(+) is bound by residues Thr-78, Arg-155 to Ile-156, Asp-175, Thr-207, Cys-234 to Arg-236, and Asp-260. Thr-78 is modified (phosphothreonine). Arg-236 is a catalytic residue. The active site involves Glu-265. His-283 (proton donor) is an active-site residue. An NAD(+)-binding site is contributed by His-283 to Ala-286.

This sequence belongs to the D-isomer specific 2-hydroxyacid dehydrogenase family. In terms of assembly, homotetramer.

It catalyses the reaction (2R)-3-phosphoglycerate + NAD(+) = 3-phosphooxypyruvate + NADH + H(+). The enzyme catalyses (R)-2-hydroxyglutarate + NAD(+) = 2-oxoglutarate + NADH + H(+). It carries out the reaction (S)-malate + NAD(+) = oxaloacetate + NADH + H(+). Its pathway is amino-acid biosynthesis; L-serine biosynthesis; L-serine from 3-phospho-D-glycerate: step 1/3. Functionally, catalyzes the reversible oxidation of 3-phospho-D-glycerate to 3-phosphonooxypyruvate, the first step of the phosphorylated L-serine biosynthesis pathway. Also catalyzes the reversible oxidation of 2-hydroxyglutarate to 2-oxoglutarate and the reversible oxidation of (S)-malate to oxaloacetate. The protein is D-3-phosphoglycerate dehydrogenase (PHGDH) of Pan troglodytes (Chimpanzee).